The following is a 338-amino-acid chain: tRNA N6-adenosine threonylcarbamoyltransferase (338 aa).

Fe cation contacts are provided by His-112 and His-116. Residues 135–139 (LVSGG), Asp-168, Gly-181, and Asn-273 each bind substrate. Asp-301 serves as a coordination point for Fe cation.

Belongs to the KAE1 / TsaD family. The cofactor is Fe(2+).

Its subcellular location is the cytoplasm. It carries out the reaction L-threonylcarbamoyladenylate + adenosine(37) in tRNA = N(6)-L-threonylcarbamoyladenosine(37) in tRNA + AMP + H(+). Required for the formation of a threonylcarbamoyl group on adenosine at position 37 (t(6)A37) in tRNAs that read codons beginning with adenine. Is involved in the transfer of the threonylcarbamoyl moiety of threonylcarbamoyl-AMP (TC-AMP) to the N6 group of A37, together with TsaE and TsaB. TsaD likely plays a direct catalytic role in this reaction. This Buchnera aphidicola subsp. Baizongia pistaciae (strain Bp) protein is tRNA N6-adenosine threonylcarbamoyltransferase.